A 351-amino-acid polypeptide reads, in one-letter code: Cell cycle control protein 50B (351 aa).

Residues 1-33 (MTWSATARGAHQPDNTAFTQQRLPAWQPLLSAS) are Cytoplasmic-facing. The helical transmembrane segment at 34 to 54 (IALPLFFCAGLAFIGLGLGLY) threads the bilayer. Over 55-315 (YSSNGIKELE…SISWMGGKNP (261 aa)) the chain is Exoplasmic loop. Asn-75, Asn-213, and Asn-286 each carry an N-linked (GlcNAc...) asparagine glycan. The chain crosses the membrane as a helical span at residues 316-336 (FLGIAYLVVGSLCILTGFVML). Residues 337–351 (VVYIRYQDQDDDDEE) are Cytoplasmic-facing.

The protein belongs to the CDC50/LEM3 family. In terms of assembly, component of a P4-ATPase flippase complex which consists of a catalytic alpha subunit and an accessory beta subunit. Interacts with alpha subunits ATP8A1, ATP8B1, ATP8B2 and ATP8B4.

The protein localises to the cell membrane. Its function is as follows. Accessory component of a P4-ATPase flippase complex which catalyzes the hydrolysis of ATP coupled to the transport of aminophospholipids from the outer to the inner leaflet of various membranes and ensures the maintenance of asymmetric distribution of phospholipids. Phospholipid translocation also seems to be implicated in vesicle formation and in uptake of lipid signaling molecules. The beta subunit may assist in binding of the phospholipid substrate. Can mediate the export of alpha subunits ATP8A1, ATP8B1, ATP8B2 and ATP8B4 from the ER to the plasma membrane. In Homo sapiens (Human), this protein is Cell cycle control protein 50B (TMEM30B).